Here is a 118-residue protein sequence, read N- to C-terminus: ATP synthase subunit c (118 aa).

2 consecutive transmembrane segments (helical) span residues 34 to 54 (AIFA…GAVG) and 88 to 108 (MAMA…LIFA).

It belongs to the ATPase C chain family. As to quaternary structure, F-type ATPases have 2 components, F(1) - the catalytic core - and F(0) - the membrane proton channel. F(1) has five subunits: alpha(3), beta(3), gamma(1), delta(1), epsilon(1). F(0) has three main subunits: a(1), b(2) and c(10-14). The alpha and beta chains form an alternating ring which encloses part of the gamma chain. F(1) is attached to F(0) by a central stalk formed by the gamma and epsilon chains, while a peripheral stalk is formed by the delta and b chains.

It localises to the cell inner membrane. In terms of biological role, f(1)F(0) ATP synthase produces ATP from ADP in the presence of a proton or sodium gradient. F-type ATPases consist of two structural domains, F(1) containing the extramembraneous catalytic core and F(0) containing the membrane proton channel, linked together by a central stalk and a peripheral stalk. During catalysis, ATP synthesis in the catalytic domain of F(1) is coupled via a rotary mechanism of the central stalk subunits to proton translocation. Key component of the F(0) channel; it plays a direct role in translocation across the membrane. A homomeric c-ring of between 10-14 subunits forms the central stalk rotor element with the F(1) delta and epsilon subunits. In Syntrophus aciditrophicus (strain SB), this protein is ATP synthase subunit c.